Here is a 157-residue protein sequence, read N- to C-terminus: uncharacterized protein (157 aa).

The protein belongs to the mimivirus L242/L243 family.

This is an uncharacterized protein from Acanthamoeba polyphaga (Amoeba).